A 375-amino-acid chain; its full sequence is Tyrosine--tRNA ligase (375 aa).

5 residues coordinate L-tyrosine: Y37, Y168, Q172, D175, and Q190. The 'KMSKS' region motif lies at 251 to 255 (KMSKS). An ATP-binding site is contributed by K254.

This sequence belongs to the class-I aminoacyl-tRNA synthetase family. TyrS type 4 subfamily. As to quaternary structure, homodimer.

The protein resides in the cytoplasm. It carries out the reaction tRNA(Tyr) + L-tyrosine + ATP = L-tyrosyl-tRNA(Tyr) + AMP + diphosphate + H(+). Catalyzes the attachment of tyrosine to tRNA(Tyr) in a two-step reaction: tyrosine is first activated by ATP to form Tyr-AMP and then transferred to the acceptor end of tRNA(Tyr). The sequence is that of Tyrosine--tRNA ligase from Pyrococcus horikoshii (strain ATCC 700860 / DSM 12428 / JCM 9974 / NBRC 100139 / OT-3).